Here is a 255-residue protein sequence, read N- to C-terminus: Acetylglutamate kinase (255 aa).

Residues 40–41 (GG), arginine 62, and asparagine 153 contribute to the substrate site.

Belongs to the acetylglutamate kinase family. ArgB subfamily.

It localises to the cytoplasm. It catalyses the reaction N-acetyl-L-glutamate + ATP = N-acetyl-L-glutamyl 5-phosphate + ADP. Its pathway is amino-acid biosynthesis; L-arginine biosynthesis; N(2)-acetyl-L-ornithine from L-glutamate: step 2/4. Functionally, catalyzes the ATP-dependent phosphorylation of N-acetyl-L-glutamate. This chain is Acetylglutamate kinase, found in Bacillus anthracis (strain A0248).